A 417-amino-acid chain; its full sequence is Gelsolin (417 aa).

Residues 93-171 (KVPVLESHYG…VVQGKEPAHL (79 aa)) form a Gelsolin-like 4 repeat. Ca(2+)-binding residues include G107, D108, E138, D150, G155, P157, T187, N227, D228, E250, D331, D332, and E354. 2 Gelsolin-like repeats span residues 213–261 (RAVE…LKIL) and 316–392 (IEEV…PTFI).

It belongs to the villin/gelsolin family.

It localises to the cytoplasm. Its subcellular location is the cytoskeleton. Its function is as follows. Calcium-regulated, actin-modulating protein that binds to the plus (or barbed) ends of actin monomers or filaments, preventing monomer exchange (end-blocking or capping). It can promote the assembly of monomers into filaments (nucleation) as well as sever filaments already formed. Plays a role in ciliogenesis. The sequence is that of Gelsolin (gsn) from Xenopus laevis (African clawed frog).